The chain runs to 94 residues: Protein FAM24B (94 aa).

Residues 1-21 (MPVIAGGILAALLLLIVVVLC) form the signal peptide.

Belongs to the FAM24 family.

The protein resides in the secreted. The protein is Protein FAM24B (FAM24B) of Homo sapiens (Human).